The sequence spans 279 residues: DegV domain-containing protein lin1977 (279 aa).

The DegV domain maps to isoleucine 4–threonine 278. Residues serine 62 and serine 94 each contribute to the hexadecanoate site.

Functionally, may bind long-chain fatty acids, such as palmitate, and may play a role in lipid transport or fatty acid metabolism. The polypeptide is DegV domain-containing protein lin1977 (Listeria innocua serovar 6a (strain ATCC BAA-680 / CLIP 11262)).